The sequence spans 542 residues: Chaperonin GroEL (542 aa).

ATP is bound by residues 29–32 (TLGP), 86–90 (DGTTT), G413, 476–478 (NAA), and D492.

This sequence belongs to the chaperonin (HSP60) family. Forms a cylinder of 14 subunits composed of two heptameric rings stacked back-to-back. Interacts with the co-chaperonin GroES.

Its subcellular location is the cytoplasm. The catalysed reaction is ATP + H2O + a folded polypeptide = ADP + phosphate + an unfolded polypeptide.. In terms of biological role, together with its co-chaperonin GroES, plays an essential role in assisting protein folding. The GroEL-GroES system forms a nano-cage that allows encapsulation of the non-native substrate proteins and provides a physical environment optimized to promote and accelerate protein folding. This chain is Chaperonin GroEL, found in Lactococcus lactis subsp. cremoris (strain SK11).